A 157-amino-acid polypeptide reads, in one-letter code: Ribonuclease H (157 aa).

The RNase H type-1 domain occupies 1 to 142 (MKKKIKIFID…CDFLAKISAK (142 aa)). Aspartate 10, glutamate 48, aspartate 70, and aspartate 134 together coordinate Mg(2+).

It belongs to the RNase H family. As to quaternary structure, monomer. Requires Mg(2+) as cofactor.

It is found in the cytoplasm. The enzyme catalyses Endonucleolytic cleavage to 5'-phosphomonoester.. Functionally, endonuclease that specifically degrades the RNA of RNA-DNA hybrids. The protein is Ribonuclease H of Wigglesworthia glossinidia brevipalpis.